A 331-amino-acid chain; its full sequence is Olfactory receptor 6B3 (331 aa).

Residues 1 to 25 (MSGENVTRVGTFILVGFPTAPGLQY) are Extracellular-facing. Residue Asn5 is glycosylated (N-linked (GlcNAc...) asparagine). A helical transmembrane segment spans residues 26 to 46 (LLFLLFLLTYLFVLVENLAII). Residues 47–54 (LTVWSSTS) lie on the Cytoplasmic side of the membrane. A helical membrane pass occupies residues 55 to 75 (LHRPMYYFLSSMSFLEIWYVS). Residues 76–99 (DITPKMLEGFLLQQKRISFVGCMT) are Extracellular-facing. A disulfide bond links Cys97 and Cys189. Residues 100 to 120 (QLYFFSSLVCTECVLLASMAY) traverse the membrane as a helical segment. Topologically, residues 121–139 (DRYVAICHPLRYHVLVTPG) are cytoplasmic. A helical transmembrane segment spans residues 140 to 160 (LCLQLVGFSFVSGFTISMIKV). Residues 161–196 (CFISSVTFCGSNVLNHFFCDISPILKLACTDFSTAE) are Extracellular-facing. Residues 197 to 217 (LVDFILAFIILVFPLLATMLS) form a helical membrane-spanning segment. Residues 218-237 (YAHITLAVLRIPSATGCWRA) are Cytoplasmic-facing. The chain crosses the membrane as a helical span at residues 238–258 (FFTCASHLTVVTVFYTALLFM). The Extracellular segment spans residues 259–271 (YVRPQAIDSRSSN). A helical transmembrane segment spans residues 272 to 292 (KLISVLYTVITPILNPLIYCL). Over 293–331 (RNKEFKNALKKAFGLTSCAVEGRLSSLLELHLQIHSQPL) the chain is Cytoplasmic.

The protein belongs to the G-protein coupled receptor 1 family.

Its subcellular location is the cell membrane. Functionally, odorant receptor. The sequence is that of Olfactory receptor 6B3 (OR6B3) from Homo sapiens (Human).